The chain runs to 287 residues: Cyclopropane mycolic acid synthase 3 (287 aa).

S-adenosyl-L-methionine contacts are provided by residues 33–34 (YS), 68–76 (LLDIGCGWG), 94–99 (TLSENQ), and 123–124 (WE). Cys269 is a catalytic residue.

The protein belongs to the CFA/CMAS family. As to quaternary structure, homodimer.

It is found in the cytoplasm. It catalyses the reaction a 1-acyl-2-(9Z)-enoyl-sn-glycero-3-phospholipid + S-adenosyl-L-methionine = a 1-acyl-2-(9-cyclopronane)-acyl-sn-glycero-3-phospholipid + S-adenosyl-L-homocysteine + H(+). The protein operates within lipid metabolism; mycolic acid biosynthesis. Involved in the phagosome maturation block (PMB). Catalyzes the conversion of a double bond to a cyclopropane ring at the proximal position of an alpha mycolic acid via the transfer of a methylene group from S-adenosyl-L-methionine. It can use cis, cis 11,14-eicosadienoic acid and linoelaidic acid as substrate. Cyclopropanated mycolic acids are key factors participating in cell envelope permeability, host immunomodulation and persistence. This chain is Cyclopropane mycolic acid synthase 3 (pcaA), found in Mycobacterium tuberculosis (strain CDC 1551 / Oshkosh).